The chain runs to 140 residues: uncharacterized protein (140 aa).

Its subcellular location is the mitochondrion. This is an uncharacterized protein from Homo sapiens (Human).